A 57-amino-acid chain; its full sequence is Granulin-3 (57 aa).

2 cysteine pairs are disulfide-bonded: Cys4–Cys16 and Cys10–Cys26.

The protein belongs to the granulin family. Post-translationally, granulins are disulfide bridged. Ubiquitous.

It is found in the secreted. Its function is as follows. Granulins have possible cytokine-like activity. They may play a role in inflammation, wound repair, and tissue remodeling. This chain is Granulin-3, found in Cyprinus carpio (Common carp).